A 307-amino-acid polypeptide reads, in one-letter code: Acyl transferase (307 aa).

Catalysis depends on charge relay system residues serine 116, aspartate 213, and histidine 243.

This sequence belongs to the LuxD family.

It functions in the pathway lipid metabolism; fatty acid reduction for biolumincescence. In terms of biological role, acyl transferase is part of the fatty acid reductase system required for aldehyde biosynthesis; it produces fatty acids for the luminescent reaction. The protein is Acyl transferase of Aliivibrio fischeri (Vibrio fischeri).